The chain runs to 282 residues: Phosphate import ATP-binding protein PstB (282 aa).

The segment covering Met1–Pro25 has biased composition (polar residues). The segment at Met1–Ala26 is disordered. An ABC transporter domain is found at Ile36–Val277. Gly68–Ser75 provides a ligand contact to ATP.

It belongs to the ABC transporter superfamily. Phosphate importer (TC 3.A.1.7) family. As to quaternary structure, the complex is composed of two ATP-binding proteins (PstB), two transmembrane proteins (PstC and PstA) and a solute-binding protein (PstS).

Its subcellular location is the cell inner membrane. The enzyme catalyses phosphate(out) + ATP + H2O = ADP + 2 phosphate(in) + H(+). Part of the ABC transporter complex PstSACB involved in phosphate import. Responsible for energy coupling to the transport system. In Rhodopirellula baltica (strain DSM 10527 / NCIMB 13988 / SH1), this protein is Phosphate import ATP-binding protein PstB.